The primary structure comprises 97 residues: UPF0250 protein HD_2015 (97 aa).

This sequence belongs to the UPF0250 family.

This is UPF0250 protein HD_2015 from Haemophilus ducreyi (strain 35000HP / ATCC 700724).